Reading from the N-terminus, the 449-residue chain is MNTKQQLVFIMADYRLGLFVFRNDLRVEDNLALYEAAQRSETLICCFCFNPTQNKYGHYGIPAMGKHRFTFLQQSLKQLRTELEMRGQKLIVLTGTFDRILTELISERQVDAIFLSQHQGYYERLQLGLLQQRFPFLPFHETPNNTLFSEQELPFELADLPETFSQFRKKVEPLSRNFSVQPVNALPSLPKNISYPGFKAETLNELASDDFEGGERAALTHLTSYFSGESAGTYKQTRNALDDFSSSTKFSPWLAQGCLSVRQIMAALRAYETEFGENESSYWISFELLWREYFFWYALKHGKRLFAFSGLSGKSPKTSFYSERFQKWCSGNTPYPIVNACMKQLNATGYMSNRGRQLVASCFVHELSLDWRYGAAYFEQQLIDYDVSSNWGNWQYLAGVGADPRGHRQFNLEKQTERYDPDNEFIERWAGDLSGQPIDSVDAADWPVR.

Positions 15-147 (RLGLFVFRND…PFHETPNNTL (133 aa)) constitute a Photolyase/cryptochrome alpha/beta domain.

The protein belongs to the DNA photolyase class-1 family. The cofactor is FAD. (6R)-5,10-methylene-5,6,7,8-tetrahydrofolate serves as cofactor.

In terms of biological role, may have a photoreceptor function. Binds DNA; probably functions as a transcriptional repressor. The chain is Cryptochrome DASH (cry) from Idiomarina loihiensis (strain ATCC BAA-735 / DSM 15497 / L2-TR).